Consider the following 207-residue polypeptide: Large ribosomal subunit protein uL4 (207 aa).

Positions 49-78 are disordered; the sequence is HAVKNRSAVSGGGRKPWRQKGTGRARQGSI.

The protein belongs to the universal ribosomal protein uL4 family. Part of the 50S ribosomal subunit.

Its function is as follows. One of the primary rRNA binding proteins, this protein initially binds near the 5'-end of the 23S rRNA. It is important during the early stages of 50S assembly. It makes multiple contacts with different domains of the 23S rRNA in the assembled 50S subunit and ribosome. In terms of biological role, forms part of the polypeptide exit tunnel. The chain is Large ribosomal subunit protein uL4 from Streptococcus equi subsp. zooepidemicus (strain MGCS10565).